A 296-amino-acid polypeptide reads, in one-letter code: Glycine--tRNA ligase alpha subunit (296 aa).

It belongs to the class-II aminoacyl-tRNA synthetase family. As to quaternary structure, tetramer of two alpha and two beta subunits.

It localises to the cytoplasm. It catalyses the reaction tRNA(Gly) + glycine + ATP = glycyl-tRNA(Gly) + AMP + diphosphate. The chain is Glycine--tRNA ligase alpha subunit from Listeria welshimeri serovar 6b (strain ATCC 35897 / DSM 20650 / CCUG 15529 / CIP 8149 / NCTC 11857 / SLCC 5334 / V8).